The following is a 62-amino-acid chain: Photosystem II reaction center protein Z (62 aa).

2 helical membrane passes run 8-28 (SVFA…VVLA) and 41-61 (FSGA…NSLI).

This sequence belongs to the PsbZ family. In terms of assembly, PSII is composed of 1 copy each of membrane proteins PsbA, PsbB, PsbC, PsbD, PsbE, PsbF, PsbH, PsbI, PsbJ, PsbK, PsbL, PsbM, PsbT, PsbY, PsbZ, Psb30/Ycf12, at least 3 peripheral proteins of the oxygen-evolving complex and a large number of cofactors. It forms dimeric complexes.

The protein resides in the plastid. It localises to the chloroplast thylakoid membrane. In terms of biological role, may control the interaction of photosystem II (PSII) cores with the light-harvesting antenna, regulates electron flow through the 2 photosystem reaction centers. PSII is a light-driven water plastoquinone oxidoreductase, using light energy to abstract electrons from H(2)O, generating a proton gradient subsequently used for ATP formation. The protein is Photosystem II reaction center protein Z of Psilotum nudum (Whisk fern).